The following is a 256-amino-acid chain: Ribonuclease T2 (256 aa).

Positions 1–24 are cleaved as a signal peptide; the sequence is MRPAALRGALLGCLCLALLCLGGA. Cysteines 48 and 55 form a disulfide. His65 is an active-site residue. Intrachain disulfides connect Cys75-Cys121, Cys184-Cys241, and Cys202-Cys213. N-linked (GlcNAc...) asparagine glycosylation is found at Asn76 and Asn106. Residues Glu114 and His118 contribute to the active site. An N-linked (GlcNAc...) asparagine glycan is attached at Asn212.

This sequence belongs to the RNase T2 family. In terms of tissue distribution, ubiquitous. Higher expression levels observed in the temporal lobe and fetal brain.

Its subcellular location is the secreted. It is found in the lysosome lumen. The protein localises to the endoplasmic reticulum lumen. The protein resides in the mitochondrion intermembrane space. The catalysed reaction is a ribonucleotidyl-ribonucleotide-RNA + H2O = a 3'-end 3'-phospho-ribonucleotide-RNA + a 5'-end dephospho-ribonucleoside-RNA + H(+). It catalyses the reaction an adenylyl-uridine-RNA = a 3'-end 2',3'-cyclophospho-AMP-RNA + a 5'-end dephospho-uridine-RNA. The enzyme catalyses a guanylyl-uridine-RNA = a 3'-end 2',3'-cyclophospho-GMP-RNA + a 5'-end dephospho-uridine-RNA. Its activity is regulated as follows. Inhibited by Zn(2+) and Cu(2+). In terms of biological role, ribonuclease that plays an essential role in innate immune response by recognizing and degrading RNAs from microbial pathogens that are subsequently sensed by TLR8. Cleaves preferentially single-stranded RNA molecules between purine and uridine residues, which critically contributes to the supply of catabolic uridine and the generation of purine-2',3'-cyclophosphate-terminated oligoribonucleotides. In turn, RNase T2 degradation products promote the RNA-dependent activation of TLR8. In plasmacytoid dendritic cells, it cooperates with PLD3 or PLD4 5'-&gt;3' exonucleases to process RNA fragments and release 2',3'-cyclic guanosine monophosphate (2',3'-cGMP), a potent stimulatory ligand for TLR7. Also plays a key role in degradation of mitochondrial RNA and processing of non-coding RNA imported from the cytosol into mitochondria. Participates as well in degradation of mitochondrion-associated cytosolic rRNAs. The chain is Ribonuclease T2 (RNASET2) from Homo sapiens (Human).